A 360-amino-acid polypeptide reads, in one-letter code: ACT1-like protein (360 aa).

The interval 339 to 360 (KKQSHNNANDHHEDSMNYSITQ) is disordered.

In terms of assembly, interacts with the receptor complex composed of ilcr-1 and ilcr-2. Also interacts with pik-1. In terms of tissue distribution, expressed in neurons.

Its function is as follows. May act as an adapter to facilitate downstream signaling for the receptor complex composed of ilcr-1 and ilcr-2, which is a signaling complex that modulates neuronal activity and animal behavior in response to sensory neuron input. This Caenorhabditis elegans protein is ACT1-like protein.